Here is a 184-residue protein sequence, read N- to C-terminus: Large ribosomal subunit protein uL6 (184 aa).

Belongs to the universal ribosomal protein uL6 family. As to quaternary structure, part of the 50S ribosomal subunit.

This protein binds to the 23S rRNA, and is important in its secondary structure. It is located near the subunit interface in the base of the L7/L12 stalk, and near the tRNA binding site of the peptidyltransferase center. The protein is Large ribosomal subunit protein uL6 of Methanosphaera stadtmanae (strain ATCC 43021 / DSM 3091 / JCM 11832 / MCB-3).